The primary structure comprises 276 residues: Putative pyridoxine kinase (276 aa).

Asparagine 139 contacts ATP. Glutamate 142 contacts Mg(2+). ATP-binding positions include lysine 176 to alanine 180, aspartate 188, glycine 213, and lysine 238.

The protein belongs to the ThiD family.

The catalysed reaction is pyridoxal + ATP = pyridoxal 5'-phosphate + ADP + H(+). Functionally, phosphorylates B6 vitamers; functions in a salvage pathway. Uses pyridoxal, pyridoxine, and pyridoxamine as substrates. This is Putative pyridoxine kinase (pdxK) from Staphylococcus epidermidis (strain ATCC 12228 / FDA PCI 1200).